We begin with the raw amino-acid sequence, 61 residues long: Large ribosomal subunit protein bL28 (61 aa).

This sequence belongs to the bacterial ribosomal protein bL28 family.

This Geobacillus thermodenitrificans (strain NG80-2) protein is Large ribosomal subunit protein bL28.